Consider the following 146-residue polypeptide: MGSDFYLRYYVGHKGKFGHEFLEFEFRPDGKLRYANNSNYKNDVMIRKEAYVHKSVMEELKRIIDDSEVTKEDDALWPPPDRVGRQELEIVIGDEHISFTTSKIGSLIDVNQSKDPEGLRVFYYLVQDLKCLVFSLIGLHFKIKPI.

Belongs to the mago nashi family. As to quaternary structure, part of the EJC core complex that contains casc3, eif4a3, magoh and rbm8a.

It is found in the nucleus. The protein resides in the nucleus speckle. It localises to the cytoplasm. In terms of biological role, core component of the splicing-dependent multiprotein exon junction complex (EJC) deposited at splice junctions on mRNAs. The EJC is a dynamic structure consisting of core proteins and several peripheral nuclear and cytoplasmic associated factors that join the complex only transiently either during EJC assembly or during subsequent mRNA metabolism. The EJC marks the position of the exon-exon junction in the mature mRNA for the gene expression machinery and the core components remain bound to spliced mRNAs throughout all stages of mRNA metabolism thereby influencing downstream processes including nuclear mRNA export, subcellular mRNA localization, translation efficiency and nonsense-mediated mRNA decay (NMD). In Xenopus laevis (African clawed frog), this protein is Protein mago nashi homolog (magoh).